A 307-amino-acid chain; its full sequence is Transcription initiation factor IIB 2 (307 aa).

The segment at 7–38 (TPKRCPECNSEHLIRDYEHGELICADCGAVIE) adopts a TFIIB-type zinc-finger fold. Residues C11, C14, C30, and C33 each coordinate Zn(2+). 2 consecutive repeat copies span residues 124–207 (QLLN…AKEL) and 218–299 (SYIS…EISK).

This sequence belongs to the TFIIB family.

In terms of biological role, stabilizes TBP binding to an archaeal box-A promoter. Also responsible for recruiting RNA polymerase II to the pre-initiation complex (DNA-TBP-TFIIB). The sequence is that of Transcription initiation factor IIB 2 from Thermoplasma acidophilum (strain ATCC 25905 / DSM 1728 / JCM 9062 / NBRC 15155 / AMRC-C165).